The following is a 492-amino-acid chain: MSKNLTTRAEDYSKWYNELVVRADLAENSGVRGCMVIKPYGYAIWEKMQAELDRMFKETGHSNAYFPLFVPKSMFEAEEKNAEGFAKECAIVTHYRLKNDPDKPGKLMVDPNAKLEEELIVRPTSEAIIWSTYKGWIQSYRDLPLLINQWANVVRWEMRTRLFLRTAEFLWQEGHTAHATRKEAIEESEKMMNVYADFAQNFMAIPVIKGLKTETERFAGAEETYCIEALMQDGKALQAGTSHFLGQNFAKAFDVKFANAEGKQEHVWGTSWGVSTRLMGALVMTHSDDNGLVLPPNLAPIQVVIVPIFKTDEEFEKISALANDLISQFKKLNISVKFDNRTTQKPGFKFAEWELKGVPVRIAIGPKDLENETFEIARRDTLTKEVKPKEGIVKYISDLLAQIQSDLFSKALQYRDTHITEVSDFEEFKKVLENKGGFISAHWDGTPETEEKIKELTKATIRCIALNRKEEIGNCMFTGKQSVGRVLFAKAY.

It belongs to the class-II aminoacyl-tRNA synthetase family. ProS type 3 subfamily. In terms of assembly, homodimer.

The protein resides in the cytoplasm. The catalysed reaction is tRNA(Pro) + L-proline + ATP = L-prolyl-tRNA(Pro) + AMP + diphosphate. Catalyzes the attachment of proline to tRNA(Pro) in a two-step reaction: proline is first activated by ATP to form Pro-AMP and then transferred to the acceptor end of tRNA(Pro). The protein is Proline--tRNA ligase of Flavobacterium psychrophilum (strain ATCC 49511 / DSM 21280 / CIP 103535 / JIP02/86).